We begin with the raw amino-acid sequence, 487 residues long: Protein DETOXIFICATION 10 (487 aa).

The next 12 helical transmembrane spans lie at 35-55, 73-93, 122-142, 155-175, 184-204, 211-231, 264-284, 293-313, 333-353, 377-397, 412-432, and 435-455; these read LICFAAPMAAVVIIQFMIQII, FAVSFCNVTGFSFIIGLSCAL, LVCLPLSLLWFNMGKLIVILG, AAWLIPGLFAYAVLQPLIRYF, LLVTSSVVFCIHVPLCWLLVY, IGGALALSLSYWLYAIFLGSF, AAMLCLEWWSYELIILLSGLL, VLSICFETLSITYSIPLAIAA, IVVYAAMSLAVMDALMVSMSL, MAPLVSISIILDSLQGVLSGV, FGAFYLWGIPIAASLAFWVHL, and VGLWIGILAGAVLQTLLLALV.

This sequence belongs to the multi antimicrobial extrusion (MATE) (TC 2.A.66.1) family.

It localises to the membrane. This chain is Protein DETOXIFICATION 10, found in Arabidopsis thaliana (Mouse-ear cress).